The chain runs to 580 residues: MVENLKQLQERVAVSDGRAKADLVIKNGRIINVFSGEIMDGDIAIKNGYIAGIGSFPDAEKIIDAAGAFIAPGFIDAHVHVESAMVTPAEFARVLLPNGVTTIVTDPHEIANVAGEKGIEFMLEDAKGAPLDMFVMLPSSVPATEGEHNGETLHAEKLHPLYRHEKVIGLAEVMDFPSVAKGSDDILRKIIDAKKEGGRIDGHGAGLTSADLNNYLAVGIRTDHESTTAKEATDRLRAGMFVMLREGTVGRDLLQTIPAVSEKNSHRFCFCTDDKLINDLITEGSINYNIKLAIKNGIDPITAIQMATINAANCHNLPYLGAVAAGYQADIVFLTDIETVEISKVLKNGEVVVDNGVRNEAAFKQQAAVPFVSPPINHHVHLQDLALPLTKETCYVIGMQPNSLFTEKRIEQVTIQGGKFVPTVENDLLKMAVVERHHDTGCVGVGIVKGFGLTEGAIATTVAHDSHNIVAVGVSDEAMKAAIDHITQTGGGIAVVNGAGQVLHDLALPIAGLLSDKSYEEVENDLAGLLNAFKQISTANGFDPFLTLSFLTLPVIPELKLTDQGLFDFATFQIISNEVN.

It belongs to the metallo-dependent hydrolases superfamily. Adenine deaminase family. The cofactor is Mn(2+).

The catalysed reaction is adenine + H2O + H(+) = hypoxanthine + NH4(+). The sequence is that of Adenine deaminase from Listeria monocytogenes serovar 1/2a (strain ATCC BAA-679 / EGD-e).